The following is a 105-amino-acid chain: Cell division topological specificity factor (105 aa).

This sequence belongs to the MinE family.

In terms of biological role, prevents the cell division inhibition by proteins MinC and MinD at internal division sites while permitting inhibition at polar sites. This ensures cell division at the proper site by restricting the formation of a division septum at the midpoint of the long axis of the cell. The sequence is that of Cell division topological specificity factor from Prochlorococcus marinus (strain MIT 9515).